We begin with the raw amino-acid sequence, 98 residues long: Flagellar hook-basal body complex protein FliE (98 aa).

Residues 22–56 are disordered; the sequence is KTDNATGAGNTFTQMLDSMSDTQSNAQTSVSNLLT. Residues 23-56 show a composition bias toward polar residues; the sequence is TDNATGAGNTFTQMLDSMSDTQSNAQTSVSNLLT.

Belongs to the FliE family.

It is found in the bacterial flagellum basal body. The chain is Flagellar hook-basal body complex protein FliE from Listeria innocua serovar 6a (strain ATCC BAA-680 / CLIP 11262).